A 162-amino-acid polypeptide reads, in one-letter code: uncharacterized protein (162 aa).

Residues 78–154 (KNLVVVDIGA…KAIKNLHYVG (77 aa)) form the PUA domain.

This is an uncharacterized protein from Methanocaldococcus jannaschii (strain ATCC 43067 / DSM 2661 / JAL-1 / JCM 10045 / NBRC 100440) (Methanococcus jannaschii).